We begin with the raw amino-acid sequence, 123 residues long: UPF0102 protein Cbei_1183 (123 aa).

This sequence belongs to the UPF0102 family.

The protein is UPF0102 protein Cbei_1183 of Clostridium beijerinckii (strain ATCC 51743 / NCIMB 8052) (Clostridium acetobutylicum).